The primary structure comprises 231 residues: Dephospho-CoA kinase (231 aa).

The DPCK domain occupies 29 to 231; sequence RVGLTGGIAS…IAGALRFDRR (203 aa). 37-42 lines the ATP pocket; it reads ASGKST.

This sequence belongs to the CoaE family.

It localises to the cytoplasm. The catalysed reaction is 3'-dephospho-CoA + ATP = ADP + CoA + H(+). It participates in cofactor biosynthesis; coenzyme A biosynthesis; CoA from (R)-pantothenate: step 5/5. Its function is as follows. Catalyzes the phosphorylation of the 3'-hydroxyl group of dephosphocoenzyme A to form coenzyme A. This is Dephospho-CoA kinase from Cutibacterium acnes (strain DSM 16379 / KPA171202) (Propionibacterium acnes).